The following is a 608-amino-acid chain: Aspartate--tRNA(Asp/Asn) ligase (608 aa).

Glutamate 175 provides a ligand contact to L-aspartate. The segment at 199 to 202 is aspartate; it reads QLFK. L-aspartate is bound at residue arginine 221. ATP-binding positions include 221–223 and glutamine 230; that span reads RDE. Position 453 (histidine 453) interacts with L-aspartate. ATP is bound at residue glutamate 487. Arginine 494 is an L-aspartate binding site. 539 to 542 provides a ligand contact to ATP; it reads GWDR. The disordered stretch occupies residues 566 to 608; sequence IDPLTDAPAAITPQQRKEAGIDAKPKPKAEAQAEAQAEESAEK. The span at 580–596 shows a compositional bias: basic and acidic residues; sequence QRKEAGIDAKPKPKAEA.

Belongs to the class-II aminoacyl-tRNA synthetase family. Type 1 subfamily. Homodimer.

The protein resides in the cytoplasm. The enzyme catalyses tRNA(Asx) + L-aspartate + ATP = L-aspartyl-tRNA(Asx) + AMP + diphosphate. Functionally, aspartyl-tRNA synthetase with relaxed tRNA specificity since it is able to aspartylate not only its cognate tRNA(Asp) but also tRNA(Asn). Reaction proceeds in two steps: L-aspartate is first activated by ATP to form Asp-AMP and then transferred to the acceptor end of tRNA(Asp/Asn). The chain is Aspartate--tRNA(Asp/Asn) ligase from Corynebacterium glutamicum (strain R).